The sequence spans 370 residues: Peptidoglycan glycosyltransferase MrdB (370 aa).

9 helical membrane passes run 20-40, 50-70, 75-95, 136-156, 160-180, 183-203, 263-283, 312-332, and 336-356; these read MLLI…SASG, IGQI…PPRV, APYL…FGAI, SLKN…LVAA, LGTS…SGLS, LIGV…FFLM, FIFA…LLAL, LILF…LPVV, and LPLV…FGIV.

Belongs to the SEDS family. MrdB/RodA subfamily.

It localises to the cell inner membrane. The enzyme catalyses [GlcNAc-(1-&gt;4)-Mur2Ac(oyl-L-Ala-gamma-D-Glu-L-Lys-D-Ala-D-Ala)](n)-di-trans,octa-cis-undecaprenyl diphosphate + beta-D-GlcNAc-(1-&gt;4)-Mur2Ac(oyl-L-Ala-gamma-D-Glu-L-Lys-D-Ala-D-Ala)-di-trans,octa-cis-undecaprenyl diphosphate = [GlcNAc-(1-&gt;4)-Mur2Ac(oyl-L-Ala-gamma-D-Glu-L-Lys-D-Ala-D-Ala)](n+1)-di-trans,octa-cis-undecaprenyl diphosphate + di-trans,octa-cis-undecaprenyl diphosphate + H(+). It participates in cell wall biogenesis; peptidoglycan biosynthesis. Functionally, peptidoglycan polymerase that is essential for cell wall elongation. The polypeptide is Peptidoglycan glycosyltransferase MrdB (Escherichia coli O157:H7).